The sequence spans 219 residues: Vesicle-associated membrane protein 711 (219 aa).

Alanine 2 is modified (N-acetylalanine). At 2-189 the chain is on the cytoplasmic side; that stretch reads AILYALVARG…RSNVWWRNCK (188 aa). A Longin domain is found at 7-111; it reads LVARGTVVLS…AMNEEFSRVL (105 aa). A v-SNARE coiled-coil homology domain is found at 126–186; sequence RINRIKGEMN…RRFRSNVWWR (61 aa). The chain crosses the membrane as a helical; Anchor for type IV membrane protein span at residues 190-210; the sequence is LTVLLILLLLVIIYIAVAFLC. Over 211-219 the chain is Vesicular; the sequence is HGPTLPSCI.

The protein belongs to the synaptobrevin family. Expressed in flowers, leaves, stems and roots.

The protein localises to the vacuole membrane. The protein resides in the prevacuolar compartment membrane. Involved in the targeting and/or fusion of transport vesicles to their target membrane. In Arabidopsis thaliana (Mouse-ear cress), this protein is Vesicle-associated membrane protein 711.